We begin with the raw amino-acid sequence, 585 residues long: Arginine--tRNA ligase (585 aa).

The short motif at 127-137 (PNTNKPLHVGH) is the 'HIGH' region element.

The protein belongs to the class-I aminoacyl-tRNA synthetase family. Monomer.

It is found in the cytoplasm. The enzyme catalyses tRNA(Arg) + L-arginine + ATP = L-arginyl-tRNA(Arg) + AMP + diphosphate. In Borrelia duttonii (strain Ly), this protein is Arginine--tRNA ligase.